A 278-amino-acid chain; its full sequence is MALKTFKPVTPSLRQLVIVDRSELYKGKPVKALTEGKISSGGRNNLGRVTVRFRGGGHKRTLRNVDFKRREFAGKVGTVERIEYDPNRTAFIALVSYEGGGQSYILAPQRVKAGDRVVSGEQVDIKPGNAMPIGNMPVGTIVHNVELKIGKGGALARSAGNYAQIVGRDQGYVTLRLNSGEQRLVHGQCYATVGAVSNPDHMNISLGKAGRKRWLGRRPHNRGVAMNPIDHPHGGGEGRTSGGRHPVTPWGFPTKGKKTRSNKRTDTFIVSSRHNRKK.

Residues 223–278 form a disordered region; it reads GVAMNPIDHPHGGGEGRTSGGRHPVTPWGFPTKGKKTRSNKRTDTFIVSSRHNRKK.

It belongs to the universal ribosomal protein uL2 family. Part of the 50S ribosomal subunit. Forms a bridge to the 30S subunit in the 70S ribosome.

In terms of biological role, one of the primary rRNA binding proteins. Required for association of the 30S and 50S subunits to form the 70S ribosome, for tRNA binding and peptide bond formation. It has been suggested to have peptidyltransferase activity; this is somewhat controversial. Makes several contacts with the 16S rRNA in the 70S ribosome. The chain is Large ribosomal subunit protein uL2 from Methylobacterium sp. (strain 4-46).